Reading from the N-terminus, the 887-residue chain is Alanine--tRNA ligase (887 aa).

Positions 581, 585, 683, and 687 each coordinate Zn(2+).

This sequence belongs to the class-II aminoacyl-tRNA synthetase family. Requires Zn(2+) as cofactor.

Its subcellular location is the cytoplasm. The enzyme catalyses tRNA(Ala) + L-alanine + ATP = L-alanyl-tRNA(Ala) + AMP + diphosphate. Catalyzes the attachment of alanine to tRNA(Ala) in a two-step reaction: alanine is first activated by ATP to form Ala-AMP and then transferred to the acceptor end of tRNA(Ala). Also edits incorrectly charged Ser-tRNA(Ala) and Gly-tRNA(Ala) via its editing domain. The sequence is that of Alanine--tRNA ligase from Ehrlichia chaffeensis (strain ATCC CRL-10679 / Arkansas).